A 465-amino-acid polypeptide reads, in one-letter code: VGFKAGVKDYKLTYYTPDYETKDTDILAAFRVTPQPGVPPEEAGAAVAAESSTGTWTTVWTDGLTSLDRYKGRCYHIEPVPGEESQFIAYVAYPLDLFEEGSVTNMFTSIVGNVFGFKALRALRLEDLRIPPAYTKTFWGPPHGIQVERDKLNKYGRPLLGCTIKPKLGLSAKNYGRAVYECLRGGLDFTKDDENVNSQPFMRWRDRFLFCAEAIFKAQAETGEIKGHYLNATAGTCEEMMKRAVFARELGVPIIMHDYLTGGFTANTSLAHYCRDNGLLLHIHRAMHAVIDRQKNHGMHFRVLAKALRMSGGDHIHAGTVVGKLEGERDITLGFVDLLRDDFVEKDRSRGIFFTQDWVSLAGVLPVASGGIHVWHMPALTEIFGDDSVLQFGGGTLGHPWGNAPGAVANRVALEACVQARNEGRDLAREGNEIIEEASKWSPELAAACAIWKKIKFEFEPVDTI.

Position 4 is an N6,N6,N6-trimethyllysine (Lys-4). Substrate contacts are provided by Asn-113 and Thr-163. Residue Lys-165 is the Proton acceptor of the active site. Lys-167 contributes to the substrate binding site. 3 residues coordinate Mg(2+): Lys-191, Asp-193, and Glu-194. The residue at position 191 (Lys-191) is an N6-carboxylysine. His-284 (proton acceptor) is an active-site residue. Substrate is bound by residues Arg-285, His-317, and Ser-369.

It belongs to the RuBisCO large chain family. Type I subfamily. As to quaternary structure, heterohexadecamer of 8 large chains and 8 small chains; disulfide-linked. The disulfide link is formed within the large subunit homodimers. Mg(2+) is required as a cofactor. The disulfide bond which can form in the large chain dimeric partners within the hexadecamer appears to be associated with oxidative stress and protein turnover.

The protein localises to the plastid. The protein resides in the chloroplast. It catalyses the reaction 2 (2R)-3-phosphoglycerate + 2 H(+) = D-ribulose 1,5-bisphosphate + CO2 + H2O. The catalysed reaction is D-ribulose 1,5-bisphosphate + O2 = 2-phosphoglycolate + (2R)-3-phosphoglycerate + 2 H(+). In terms of biological role, ruBisCO catalyzes two reactions: the carboxylation of D-ribulose 1,5-bisphosphate, the primary event in carbon dioxide fixation, as well as the oxidative fragmentation of the pentose substrate in the photorespiration process. Both reactions occur simultaneously and in competition at the same active site. The chain is Ribulose bisphosphate carboxylase large chain from Dillenia indica (Elephant apple).